The chain runs to 347 residues: Selenide, water dikinase 2 (347 aa).

The active site involves selenocysteine 18. Residue selenocysteine 18 is a non-standard amino acid, selenocysteine. Residues lysine 21 and 48–50 (TSD) each bind ATP. Aspartate 51 is a binding site for Mg(2+). Residues aspartate 68, aspartate 91, and 138–140 (GHT) contribute to the ATP site. Position 91 (aspartate 91) interacts with Mg(2+). Aspartate 226 contributes to the Mg(2+) binding site.

The protein belongs to the selenophosphate synthase 1 family. Class I subfamily. Homodimer. Requires Mg(2+) as cofactor.

It catalyses the reaction hydrogenselenide + ATP + H2O = selenophosphate + AMP + phosphate + 2 H(+). Its function is as follows. Synthesizes selenophosphate from selenide and ATP. The sequence is that of Selenide, water dikinase 2 from Peptoclostridium acidaminophilum (Eubacterium acidaminophilum).